Consider the following 309-residue polypeptide: Tagatose-6-phosphate kinase (309 aa).

This sequence belongs to the carbohydrate kinase PfkB family. LacC subfamily.

It catalyses the reaction D-tagatofuranose 6-phosphate + ATP = D-tagatofuranose 1,6-bisphosphate + ADP + H(+). The protein operates within carbohydrate metabolism; D-tagatose 6-phosphate degradation; D-glyceraldehyde 3-phosphate and glycerone phosphate from D-tagatose 6-phosphate: step 1/2. The chain is Tagatose-6-phosphate kinase from Streptococcus pyogenes serotype M3 (strain SSI-1).